The chain runs to 213 residues: Methylthioribulose-1-phosphate dehydratase (213 aa).

Zn(2+) is bound by residues H104 and H106.

Belongs to the aldolase class II family. MtnB subfamily. It depends on Zn(2+) as a cofactor.

It catalyses the reaction 5-(methylsulfanyl)-D-ribulose 1-phosphate = 5-methylsulfanyl-2,3-dioxopentyl phosphate + H2O. It functions in the pathway amino-acid biosynthesis; L-methionine biosynthesis via salvage pathway; L-methionine from S-methyl-5-thio-alpha-D-ribose 1-phosphate: step 2/6. Catalyzes the dehydration of methylthioribulose-1-phosphate (MTRu-1-P) into 2,3-diketo-5-methylthiopentyl-1-phosphate (DK-MTP-1-P). The chain is Methylthioribulose-1-phosphate dehydratase from Stenotrophomonas maltophilia (strain R551-3).